A 344-amino-acid chain; its full sequence is Probable magnesium transporter NIPA9 (344 aa).

The Cytoplasmic segment spans residues 1–46 (MWESICLTLAATAGNNIGKVLQKKGTIILPPLSLKLKVLRAYAENK). 2 helical membrane-spanning segments follow: residues 47-67 (PWAL…RALS) and 68-88 (LAPV…LSVF). The Cytoplasmic segment spans residues 89-98 (SHFYLKEVMN). A helical transmembrane segment spans residues 99–119 (VFDWIGITVAGIGTIGVGAGG). Residues 120 to 125 (EEQEAS) lie on the Extracellular side of the membrane. A helical transmembrane segment spans residues 126–146 (LISVFQLLWLALVVAILFVLL). The Cytoplasmic portion of the chain corresponds to 147 to 166 (NAWLHIFKRQRREQELGEYE). A helical membrane pass occupies residues 167–187 (VVEEIIYGLESGILFGMASVV). Topologically, residues 188 to 191 (SKMG) are extracellular. A helical membrane pass occupies residues 192–212 (FVFVEQGFSTMFIPMCISISI). Residues 213–231 (CCSGTGFFYQTRGLKHGRA) are Cytoplasmic-facing. A helical transmembrane segment spans residues 232-252 (IVVSTCAAVASIVTGVVAGMF). The Extracellular segment spans residues 253–265 (ALGEKLPTSPSGR). A helical membrane pass occupies residues 266 to 286 (LLLLLGWLLIMLGVVLLVTSS). Topologically, residues 287-344 (RLIRHLPRSFRRSRQTSLERGFNIRRTTSHTPKDTNPSAVIQAATLHHLLSSPSKDKD) are cytoplasmic.

Belongs to the NIPA (TC 2.A.7) family. Homodimer.

It localises to the cell membrane. The protein resides in the early endosome. Its function is as follows. Acts as a Mg(2+) transporter. Can also transport other divalent cations such as Fe(2+), Sr(2+), Ba(2+), Mn(2+) and Co(2+) but to a much less extent than Mg(2+). The chain is Probable magnesium transporter NIPA9 from Arabidopsis thaliana (Mouse-ear cress).